A 75-amino-acid polypeptide reads, in one-letter code: UPF0270 protein PFLU_4323 (75 aa).

This sequence belongs to the UPF0270 family.

This is UPF0270 protein PFLU_4323 from Pseudomonas fluorescens (strain SBW25).